An 837-amino-acid chain; its full sequence is Tuftelin-interacting protein 11 (837 aa).

Basic and acidic residues-rich tracts occupy residues 1–13 and 53–64; these read MSLS…GEGR and VWAERDSDDERP. Disordered regions lie at residues 1-21, 53-72, and 85-133; these read MSLS…DDER, VWAE…KRAR, and LKKG…KGFA. Residues 1-50 form a required for interaction with DHX15 region; sequence MSLSHLYRDGEGRIDDDDDERENFEITDWDLQNEFNPNRQRHWQTKEEAT. 3 positions are modified to phosphoserine: Ser2, Ser59, and Ser98. Positions 91-102 are enriched in acidic residues; that stretch reads EEAELEDSDDEE. Over residues 103–116 the composition is skewed to basic and acidic residues; the sequence is KPVKQDDFPKDFGP. The residue at position 144 (Ser144) is a Phosphoserine. The region spanning 149-195 is the G-patch domain; that stretch reads TKGIGQKLLQKMGYVPGRGLGKNAQGIINPIEAKQRKGKGAVGAYGS. Residues 179 to 236 form a disordered region; sequence IEAKQRKGKGAVGAYGSERTTQSMQDFPVVDSEEEAEEEFQKELSQWRKDPSGSKKKP. Ser210 carries the post-translational modification Phosphoserine. Residues 217-231 show a composition bias toward basic and acidic residues; sequence EFQKELSQWRKDPSG. Positions 700–705 match the Nuclear localization signal motif; that stretch reads VKDKFN. The tract at residues 710–734 is required for nuclear speckle localization; that stretch reads IMNRAVSSNVGAYMQPGARENIAYL.

Belongs to the TFP11/STIP family. Identified in the spliceosome C complex. Found in the Intron Large (IL) complex, a post-mRNA release spliceosomal complex containing the excised intron, U2, U5 and U6 snRNPs, and splicing factors. Interacts with TUFT1. Interacts with DHX15; indicative for a recruitment of DHX15 to the IL complex. Interacts with GCFC2.

It is found in the cytoplasm. It localises to the nucleus. Involved in pre-mRNA splicing, specifically in spliceosome disassembly during late-stage splicing events. Intron turnover seems to proceed through reactions in two lariat-intron associated complexes termed Intron Large (IL) and Intron Small (IS). In cooperation with DHX15 seems to mediate the transition of the U2, U5 and U6 snRNP-containing IL complex to the snRNP-free IS complex leading to efficient debranching and turnover of excised introns. May play a role in the differentiation of ameloblasts and odontoblasts or in the forming of the enamel extracellular matrix. The polypeptide is Tuftelin-interacting protein 11 (TFIP11) (Pan troglodytes (Chimpanzee)).